The sequence spans 116 residues: Protein Wnt-5(III) (116 aa).

A lipid anchor (O-palmitoleoyl serine; by PORCN) is attached at S1. An N-linked (GlcNAc...) asparagine glycan is attached at N69. Residues C82 and C97 are joined by a disulfide bond.

Belongs to the Wnt family. Palmitoleoylation is required for efficient binding to frizzled receptors. Depalmitoleoylation leads to Wnt signaling pathway inhibition.

The protein localises to the secreted. The protein resides in the extracellular space. Its subcellular location is the extracellular matrix. Ligand for members of the frizzled family of seven transmembrane receptors. Probable developmental protein. May be a signaling molecule which affects the development of discrete regions of tissues. Is likely to signal over only few cell diameters. In Eptatretus stoutii (Pacific hagfish), this protein is Protein Wnt-5(III) (WNT-5(III)).